The chain runs to 465 residues: Eukaryotic translation initiation factor 3 subunit M (465 aa).

A PCI domain is found at 215 to 383 (EEMSYNHVIL…GEFLVHRATY (169 aa)). The disordered stretch occupies residues 429-465 (AAAESGREGGARGGAGERRRGGGGHQGPREVDLVGGD). 2 stretches are compositionally biased toward basic and acidic residues: residues 433–448 (SGRE…ERRR) and 455–465 (GPREVDLVGGD).

Belongs to the eIF-3 subunit M family. As to quaternary structure, component of the eukaryotic translation initiation factor 3 (eIF-3) complex.

It localises to the cytoplasm. Functionally, component of the eukaryotic translation initiation factor 3 (eIF-3) complex, which is involved in protein synthesis of a specialized repertoire of mRNAs and, together with other initiation factors, stimulates binding of mRNA and methionyl-tRNAi to the 40S ribosome. The eIF-3 complex specifically targets and initiates translation of a subset of mRNAs involved in cell proliferation. This chain is Eukaryotic translation initiation factor 3 subunit M, found in Coccidioides immitis (strain RS) (Valley fever fungus).